The primary structure comprises 501 residues: O-phosphoseryl-tRNA(Sec) selenium transferase (501 aa).

The tetramerization stretch occupies residues methionine 1–asparagine 44. A Phosphoserine modification is found at serine 14. Arginine 75 lines the pyridoxal 5'-phosphate pocket. A phosphate loop (P-loop) region spans residues glycine 96–proline 106. Residues arginine 97, serine 98, and glutamine 105 each coordinate substrate. Arginine 271 lines the tRNA pocket. Position 284 is an N6-(pyridoxal phosphate)lysine (lysine 284). Arginine 313 is a substrate binding site. TRNA-binding residues include arginine 398 and lysine 463. The segment at aspartate 474–leucine 493 is SLA/LP epitope.

This sequence belongs to the SepSecS family. In terms of assembly, homotetramer formed by a catalytic dimer and a non-catalytic dimer serving as a binding platform that orients tRNASec for catalysis. Each tetramer binds the CCA ends of two tRNAs which point to the active sites of the catalytic dimer. It depends on pyridoxal 5'-phosphate as a cofactor. In terms of tissue distribution, primarily expressed in liver, pancreas, kidney and lung. Overexpressed in PHA-stimulated T-cells.

Its subcellular location is the cytoplasm. The catalysed reaction is O-phospho-L-seryl-tRNA(Sec) + selenophosphate + H2O = L-selenocysteinyl-tRNA(Sec) + 2 phosphate. Its pathway is aminoacyl-tRNA biosynthesis; selenocysteinyl-tRNA(Sec) biosynthesis; selenocysteinyl-tRNA(Sec) from L-seryl-tRNA(Sec) (archaeal/eukaryal route): step 2/2. Converts O-phosphoseryl-tRNA(Sec) to selenocysteinyl-tRNA(Sec) required for selenoprotein biosynthesis. The chain is O-phosphoseryl-tRNA(Sec) selenium transferase (SEPSECS) from Homo sapiens (Human).